Reading from the N-terminus, the 348-residue chain is L-threonine 3-dehydrogenase (348 aa).

Cys42 contacts Zn(2+). Catalysis depends on charge relay system residues Thr44 and His47. His67, Glu68, Cys97, Cys100, Cys103, and Cys111 together coordinate Zn(2+). NAD(+) is bound by residues Leu179, Glu199, Arg204, 266–268 (LGL), and 291–292 (IT).

Belongs to the zinc-containing alcohol dehydrogenase family. Homodimer. Homotetramer; dimer of dimers. It depends on Zn(2+) as a cofactor.

It is found in the cytoplasm. It carries out the reaction L-threonine + NAD(+) = (2S)-2-amino-3-oxobutanoate + NADH + H(+). It functions in the pathway amino-acid degradation; L-threonine degradation via oxydo-reductase pathway; glycine from L-threonine: step 1/2. Its activity is regulated as follows. Is totally inhibited by EDTA in vitro. In terms of biological role, catalyzes the NAD(+)-dependent oxidation of L-threonine to 2-amino-3-ketobutyrate. Is much less efficient when using NADP(+) instead of NAD(+). To a lesser extent, also catalyzes the oxidation of L-serine and DL-threo-3-phenylserine, but not that of L-allo-threonine, D-threonine and D-allo-threonine and many other L-amino acids. The protein is L-threonine 3-dehydrogenase of Pyrococcus horikoshii (strain ATCC 700860 / DSM 12428 / JCM 9974 / NBRC 100139 / OT-3).